A 629-amino-acid polypeptide reads, in one-letter code: tRNA uridine 5-carboxymethylaminomethyl modification enzyme MnmG (629 aa).

Position 4–9 (4–9 (GGGHAG)) interacts with FAD. NAD(+) is bound at residue 268-282 (GPRYCPSIEDKVNRF).

It belongs to the MnmG family. In terms of assembly, homodimer. Heterotetramer of two MnmE and two MnmG subunits. FAD is required as a cofactor.

It is found in the cytoplasm. In terms of biological role, NAD-binding protein involved in the addition of a carboxymethylaminomethyl (cmnm) group at the wobble position (U34) of certain tRNAs, forming tRNA-cmnm(5)s(2)U34. The polypeptide is tRNA uridine 5-carboxymethylaminomethyl modification enzyme MnmG (Helicobacter hepaticus (strain ATCC 51449 / 3B1)).